A 1115-amino-acid chain; its full sequence is Phytochrome E (1115 aa).

Residues 213–383 (DIGTLCDTVV…AFSLQLYMEL (171 aa)) form the GAF domain. C318 is a phytochromobilin binding site. The PAS 1 domain occupies 598-669 (MALELVRLVE…ALMCRALQGE (72 aa)). Residues 672–728 (RNVEVKLLKFGNHPTKEVVYLVVNACTSRDYKNDIIGVCFVGQDITPEKAVMDKFVR) enclose the PAC domain. The 72-residue stretch at 732-803 (DYEAIIQSLN…DALTKFMILL (72 aa)) folds into the PAS 2 domain. The 221-residue stretch at 880 to 1100 (YIQQQMKNPL…YFLIDLDFKT (221 aa)) folds into the Histidine kinase domain.

The protein belongs to the phytochrome family. In terms of assembly, homodimer. Contains one covalently linked phytochromobilin chromophore.

Regulatory photoreceptor which exists in two forms that are reversibly interconvertible by light: the Pr form that absorbs maximally in the red region of the spectrum and the Pfr form that absorbs maximally in the far-red region. Photoconversion of Pr to Pfr induces an array of morphogenic responses, whereas reconversion of Pfr to Pr cancels the induction of those responses. Pfr controls the expression of a number of nuclear genes including those encoding the small subunit of ribulose-bisphosphate carboxylase, chlorophyll A/B binding protein, protochlorophyllide reductase, rRNA, etc. It also controls the expression of its own gene(s) in a negative feedback fashion. The protein is Phytochrome E (PHYE) of Ipomoea nil (Japanese morning glory).